The following is a 271-amino-acid chain: Putative phosphoenolpyruvate synthase regulatory protein (271 aa).

Residue 151–158 (GVSRSGKT) participates in ADP binding.

The protein belongs to the pyruvate, phosphate/water dikinase regulatory protein family. PSRP subfamily.

The catalysed reaction is [pyruvate, water dikinase] + ADP = [pyruvate, water dikinase]-phosphate + AMP + H(+). It catalyses the reaction [pyruvate, water dikinase]-phosphate + phosphate + H(+) = [pyruvate, water dikinase] + diphosphate. Functionally, bifunctional serine/threonine kinase and phosphorylase involved in the regulation of the phosphoenolpyruvate synthase (PEPS) by catalyzing its phosphorylation/dephosphorylation. The polypeptide is Putative phosphoenolpyruvate synthase regulatory protein (Burkholderia vietnamiensis (strain G4 / LMG 22486) (Burkholderia cepacia (strain R1808))).